The primary structure comprises 159 residues: Endoribonuclease YbeY (159 aa).

The Zn(2+) site is built by histidine 125, histidine 129, and histidine 135.

The protein belongs to the endoribonuclease YbeY family. Requires Zn(2+) as cofactor.

It localises to the cytoplasm. Single strand-specific metallo-endoribonuclease involved in late-stage 70S ribosome quality control and in maturation of the 3' terminus of the 16S rRNA. The sequence is that of Endoribonuclease YbeY from Lactiplantibacillus plantarum (strain ATCC BAA-793 / NCIMB 8826 / WCFS1) (Lactobacillus plantarum).